Here is a 1141-residue protein sequence, read N- to C-terminus: Isoleucine--tRNA ligase, cytoplasmic (1141 aa).

The 'HIGH' region motif lies at 50–60 (PFATGLPHYGH). Positions 601–605 (KMSKS) match the 'KMSKS' region motif. Residue Lys604 participates in ATP binding.

The protein belongs to the class-I aminoacyl-tRNA synthetase family.

The protein resides in the cytoplasm. The enzyme catalyses tRNA(Ile) + L-isoleucine + ATP = L-isoleucyl-tRNA(Ile) + AMP + diphosphate. This chain is Isoleucine--tRNA ligase, cytoplasmic, found in Caenorhabditis elegans.